Consider the following 641-residue polypeptide: Frizzled-1 (641 aa).

Residues 1–68 form the signal peptide; that stretch reads MAEEAVPSES…WLLEAPLLLG (68 aa). Residues 69 to 316 lie on the Extracellular side of the membrane; that stretch reads VRAQPAGQVS…PEELRFSRTW (248 aa). Residues 74–99 form a disordered region; sequence AGQVSGPGQQRPPPPQPQQGGQQYNG. Residues 106–224 form the FZ domain; that stretch reads PDHGYCQPIS…HGAGELCVGQ (119 aa). Disulfide bonds link Cys111–Cys172, Cys119–Cys165, Cys156–Cys192, Cys182–Cys221, and Cys186–Cys209. Residue Asn125 is glycosylated (N-linked (GlcNAc...) asparagine). Residue Asn225 is glycosylated (N-linked (GlcNAc...) asparagine). A helical transmembrane segment spans residues 317-337; the sequence is IGIWSVLCCASTLFTVLTYLV. The Cytoplasmic portion of the chain corresponds to 338–348; sequence DMRRFSYPERP. A helical membrane pass occupies residues 349–369; sequence IIFLSGCYTAVAVAYIAGFLL. At 370 to 396 the chain is on the extracellular side; sequence EDRVVCNDKFAEDGARTVAQGTKKEGC. Residues 397-417 form a helical membrane-spanning segment; sequence TILFMMLYFFSMASSIWWVIL. At 418–439 the chain is on the cytoplasmic side; it reads SLTWFLAAGMKWGHEAIEANSQ. Residues 440–460 form a helical membrane-spanning segment; sequence YFHLAAWAVPAIKTITILALG. At 461–483 the chain is on the extracellular side; it reads QVDGDVLSGVCFVGLNNVDALRG. The helical transmembrane segment at 484–504 threads the bilayer; sequence FVLAPLFVYLFIGTSFLLAGF. Residues 505-530 are Cytoplasmic-facing; that stretch reads VSLFRIRTIMKHDGTKTEKLEKLMVR. The chain crosses the membrane as a helical span at residues 531-551; the sequence is IGVFSVLYTVPATIVIACYFY. At 552–595 the chain is on the extracellular side; that stretch reads EQAFRDQWERSWVAQSCKSYAIPCPHLQGGGGVPPHPPMSPDFT. A helical membrane pass occupies residues 596-616; that stretch reads VFMIKYLMTLIVGITSGFWIW. The Cytoplasmic portion of the chain corresponds to 617 to 641; that stretch reads SGKTLNSWRKFYTRLTNSKQGETTV. The short motif at 619–624 is the Lys-Thr-X-X-X-Trp motif, mediates interaction with the PDZ domain of Dvl family members element; the sequence is KTLNSW. Positions 639-641 match the PDZ-binding motif; the sequence is TTV.

The protein belongs to the G-protein coupled receptor Fz/Smo family. Interacts with MYOC. Interacts with WNT7B. In terms of processing, ubiquitinated by ZNRF3, leading to its degradation by the proteasome. In terms of tissue distribution, widely expressed. Most abundant in kidney, liver, uterus, ovary and heart. Lower levels seen in brain and intestine. Extremely low in calvaria, mammary glands and testis.

The protein localises to the cell membrane. In terms of biological role, receptor for Wnt proteins. Activated by WNT3A, WNT3, WNT1 and to a lesser extent WNT2, but apparently not by WNT4, WNT5A, WNT5B, WNT6 or WNT7A. Contradictory results have been reported for activation by WNT7B. Functions in the canonical Wnt/beta-catenin signaling pathway. The canonical Wnt/beta-catenin signaling pathway leads to the activation of disheveled proteins, inhibition of GSK-3 kinase, nuclear accumulation of beta-catenin and activation of Wnt target genes. A second signaling pathway involving PKC and calcium fluxes has been seen for some family members, but it is not yet clear if it represents a distinct pathway or if it can be integrated in the canonical pathway, as PKC seems to be required for Wnt-mediated inactivation of GSK-3 kinase. Both pathways seem to involve interactions with G-proteins. May be involved in transduction and intercellular transmission of polarity information during tissue morphogenesis and/or in differentiated tissues. This chain is Frizzled-1 (Fzd1), found in Rattus norvegicus (Rat).